Consider the following 152-residue polypeptide: Protein-export protein SecB (152 aa).

It belongs to the SecB family. In terms of assembly, homotetramer, a dimer of dimers. One homotetramer interacts with 1 SecA dimer.

The protein resides in the cytoplasm. In terms of biological role, one of the proteins required for the normal export of preproteins out of the cell cytoplasm. It is a molecular chaperone that binds to a subset of precursor proteins, maintaining them in a translocation-competent state. It also specifically binds to its receptor SecA. The chain is Protein-export protein SecB from Acinetobacter baumannii (strain AB307-0294).